The following is a 55-amino-acid chain: Large ribosomal subunit protein bL33 (55 aa).

The protein belongs to the bacterial ribosomal protein bL33 family.

The chain is Large ribosomal subunit protein bL33 from Ruegeria sp. (strain TM1040) (Silicibacter sp.).